We begin with the raw amino-acid sequence, 214 residues long: Octanoyltransferase (214 aa).

The region spanning 29 to 214 (STTPDEIWIL…EHLQKQLMPT (186 aa)) is the BPL/LPL catalytic domain. Substrate-binding positions include 69 to 76 (RGGEITYH), 146 to 148 (ALG), and 159 to 161 (GLA). Catalysis depends on C177, which acts as the Acyl-thioester intermediate.

This sequence belongs to the LipB family.

The protein localises to the cytoplasm. The enzyme catalyses octanoyl-[ACP] + L-lysyl-[protein] = N(6)-octanoyl-L-lysyl-[protein] + holo-[ACP] + H(+). The protein operates within protein modification; protein lipoylation via endogenous pathway; protein N(6)-(lipoyl)lysine from octanoyl-[acyl-carrier-protein]: step 1/2. Catalyzes the transfer of endogenously produced octanoic acid from octanoyl-acyl-carrier-protein onto the lipoyl domains of lipoate-dependent enzymes. Lipoyl-ACP can also act as a substrate although octanoyl-ACP is likely to be the physiological substrate. The sequence is that of Octanoyltransferase from Polynucleobacter asymbioticus (strain DSM 18221 / CIP 109841 / QLW-P1DMWA-1) (Polynucleobacter necessarius subsp. asymbioticus).